A 109-amino-acid chain; its full sequence is Parvalbumin alpha (109 aa).

EF-hand domains are found at residues 38 to 73 (KTDA…FSAH) and 77 to 109 (LNDT…VAQA). The Ca(2+) site is built by Asp51, Asp53, Ser55, Glu62, Asp90, Asp92, Asp94, Lys96, and Glu101.

The protein belongs to the parvalbumin family.

In muscle, parvalbumin is thought to be involved in relaxation after contraction. It binds two calcium ions. The protein is Parvalbumin alpha of Triakis semifasciata (Leopard shark).